A 343-amino-acid chain; its full sequence is Ribonucleoside-diphosphate reductase small subunit (343 aa).

Fe cation is bound by residues D101, E131, and H134. The active site involves Y138. The chain crosses the membrane as a helical span at residues 188–208 (ILMILIEGIFFSASFAAIAYL). Positions 194, 228, and 231 each coordinate Fe cation.

The protein belongs to the ribonucleoside diphosphate reductase small chain family. As to quaternary structure, heterotetramer composed of a homodimer of the large subunit (R1) and a homodimer of the small subunit (R2). Larger multisubunit protein complex are also active, composed of (R1)n(R2)n. It depends on Fe cation as a cofactor.

It localises to the host membrane. The enzyme catalyses a 2'-deoxyribonucleoside 5'-diphosphate + [thioredoxin]-disulfide + H2O = a ribonucleoside 5'-diphosphate + [thioredoxin]-dithiol. Functionally, ribonucleoside-diphosphate reductase holoenzyme provides the precursors necessary for viral DNA synthesis. Allows virus growth in non-dividing cells, as well as reactivation from latency in infected hosts. Catalyzes the biosynthesis of deoxyribonucleotides from the corresponding ribonucleotides. This is Ribonucleoside-diphosphate reductase small subunit from Gallid herpesvirus 2 (strain Chicken/Md5/ATCC VR-987) (GaHV-2).